Here is an 84-residue protein sequence, read N- to C-terminus: Small ribosomal subunit protein uS17 (84 aa).

The protein belongs to the universal ribosomal protein uS17 family. As to quaternary structure, part of the 30S ribosomal subunit.

Its function is as follows. One of the primary rRNA binding proteins, it binds specifically to the 5'-end of 16S ribosomal RNA. This is Small ribosomal subunit protein uS17 from Borrelia hermsii (strain HS1 / DAH).